Consider the following 208-residue polypeptide: FMN-dependent NADH:quinone oxidoreductase 4 (208 aa).

This sequence belongs to the azoreductase type 1 family. Homodimer. Requires FMN as cofactor.

The catalysed reaction is 2 a quinone + NADH + H(+) = 2 a 1,4-benzosemiquinone + NAD(+). The enzyme catalyses N,N-dimethyl-1,4-phenylenediamine + anthranilate + 2 NAD(+) = 2-(4-dimethylaminophenyl)diazenylbenzoate + 2 NADH + 2 H(+). In terms of biological role, quinone reductase that provides resistance to thiol-specific stress caused by electrophilic quinones. Its function is as follows. Also exhibits azoreductase activity. Catalyzes the reductive cleavage of the azo bond in aromatic azo compounds to the corresponding amines. This Bacillus cereus (strain ZK / E33L) protein is FMN-dependent NADH:quinone oxidoreductase 4.